The sequence spans 437 residues: Integrase (437 aa).

The Core-binding (CB) domain maps to 73-158 (WTVERWLTHW…TARTAFGEAY (86 aa)). One can recognise a Tyr recombinase domain in the interval 179–428 (EEVEPLEVED…DSVRNDVADR (250 aa)). Residues arginine 214, lysine 245, histidine 379, arginine 382, and tryptophan 405 contribute to the active site. Tyrosine 414 functions as the O-(3'-phospho-DNA)-tyrosine intermediate in the catalytic mechanism.

Belongs to the 'phage' integrase family.

In terms of biological role, is a recombinase (or integrase), catalyzing the cutting and rejoining of the recombining DNA molecules. The chain is Integrase (int) from Saccharopolyspora erythraea (Streptomyces erythraeus).